A 75-amino-acid polypeptide reads, in one-letter code: Large ribosomal subunit protein bL31 (75 aa).

The protein belongs to the bacterial ribosomal protein bL31 family. Type A subfamily. In terms of assembly, part of the 50S ribosomal subunit.

Its function is as follows. Binds the 23S rRNA. This is Large ribosomal subunit protein bL31 from Rhodopseudomonas palustris (strain BisB18).